We begin with the raw amino-acid sequence, 220 residues long: Ras-related protein Rab-3A (220 aa).

GTP-binding residues include S31, S32, V33, G34, K35, T36, S37, T48, P49, S53, and T54. Mg(2+) is bound at residue T36. The Switch 1 signature appears at 49 to 58 (PAFVSTVGID). Residues T54 and D77 each coordinate Mg(2+). A GTP-binding site is contributed by G80. The Switch 2 motif lies at 80-96 (GQERYRTITTAYYRGAM). The residue at position 86 (T86) is a Phosphothreonine; by LRRK2. Residues N135, K136, D138, A166, and K167 each contribute to the GTP site. S188 and S190 each carry phosphoserine. The interval 194–220 (ADPAVTGAKQGPQLSDQQVPPHQDCAC) is disordered. Residues C218 and C220 are each lipidated (S-geranylgeranyl cysteine). C220 carries the post-translational modification Cysteine methyl ester.

This sequence belongs to the small GTPase superfamily. Rab family. As to quaternary structure, interacts with RIMS1 and RIMS2. Interacts with Rabphilin-3A/RPH3A and Rab effector Noc2/RPH3AL. Interacts with SYTL4. Interacts with RAB3IP. Interacts with SGSM1 and SGSM3. Interacts with SYT1. Interacts with MYH9; this interaction is essential for lysosome exocytosis and plasma membrane repair. Interacts with STXBP1; this interaction promotes RAB3A dissociation from the vesicle membrane. Interacts with SNCA. The GTP-bound form interacts with REP15. Interacts with GDI1, GDI2, CHM and CHML; phosphorylation at Thr-86 disrupts these interactions. Interacts with MADD (via uDENN domain); the GTP-bound form is preferred for interaction. Mg(2+) is required as a cofactor. In terms of processing, phosphorylation of Thr-86 in the switch II region by LRRK2 prevents the association of RAB regulatory proteins, including CHM, CHML and RAB GDP dissociation inhibitors GDI1 and GDI2. In terms of tissue distribution, specifically expressed in brain.

It localises to the cytoplasm. It is found in the cytosol. The protein resides in the lysosome. The protein localises to the cytoplasmic vesicle. Its subcellular location is the secretory vesicle. It localises to the cell projection. It is found in the axon. The protein resides in the cell membrane. The protein localises to the presynapse. Its subcellular location is the postsynapse. It catalyses the reaction GTP + H2O = GDP + phosphate + H(+). With respect to regulation, regulated by guanine nucleotide exchange factors (GEFs) including RAB3IL1 and MADD which promote the exchange of bound GDP for free GTP. Regulated by GTPase activating proteins (GAPs) including RAB3GAP1 and TBC1D10B which increase the GTP hydrolysis activity. Inhibited by GDP dissociation inhibitors (GDIs) which prevent Rab-GDP dissociation. Functionally, the small GTPases Rab are key regulators of intracellular membrane trafficking, from the formation of transport vesicles to their fusion with membranes. Rabs cycle between an inactive GDP-bound form and an active GTP-bound form that is able to recruit to membranes different sets of downstream effectors directly responsible for vesicle formation, movement, tethering and fusion. RAB3A plays a central role in regulated exocytosis and secretion. Controls the recruitment, tethering and docking of secretory vesicles to the plasma membrane. Upon stimulation, switches to its active GTP-bound form, cycles to vesicles and recruits effectors such as RIMS1, RIMS2, Rabphilin-3A/RPH3A, RPH3AL or SYTL4 to help the docking of vesicules onto the plasma membrane. Upon GTP hydrolysis by GTPase-activating protein, dissociates from the vesicle membrane allowing the exocytosis to proceed. Stimulates insulin secretion through interaction with RIMS2 or RPH3AL effectors in pancreatic beta cells. Regulates calcium-dependent lysosome exocytosis and plasma membrane repair (PMR) via the interaction with 2 effectors, SYTL4 and myosin-9/MYH9. Acts as a positive regulator of acrosome content secretion in sperm cells by interacting with RIMS1. Also plays a role in the regulation of dopamine release by interacting with synaptotagmin I/SYT. This chain is Ras-related protein Rab-3A, found in Homo sapiens (Human).